The following is a 79-amino-acid chain: Ribonuclease P protein component 1 (79 aa).

This sequence belongs to the eukaryotic/archaeal RNase P protein component 1 family. As to quaternary structure, consists of a catalytic RNA component and at least 4-5 protein subunits.

Its subcellular location is the cytoplasm. The catalysed reaction is Endonucleolytic cleavage of RNA, removing 5'-extranucleotides from tRNA precursor.. Its function is as follows. Part of ribonuclease P, a protein complex that generates mature tRNA molecules by cleaving their 5'-ends. The polypeptide is Ribonuclease P protein component 1 (Saccharolobus solfataricus (strain ATCC 35092 / DSM 1617 / JCM 11322 / P2) (Sulfolobus solfataricus)).